Here is a 115-residue protein sequence, read N- to C-terminus: Nucleoid-associated protein Ccel_0243 (115 aa).

Belongs to the YbaB/EbfC family. Homodimer.

Its subcellular location is the cytoplasm. The protein localises to the nucleoid. Its function is as follows. Binds to DNA and alters its conformation. May be involved in regulation of gene expression, nucleoid organization and DNA protection. This is Nucleoid-associated protein Ccel_0243 from Ruminiclostridium cellulolyticum (strain ATCC 35319 / DSM 5812 / JCM 6584 / H10) (Clostridium cellulolyticum).